Reading from the N-terminus, the 138-residue chain is uncharacterized protein (138 aa).

The region spanning 3–72 is the HTH merR-type domain; sequence LYSISKAAEK…LEDINEFVKD (70 aa). Residues 6 to 25 constitute a DNA-binding region (H-T-H motif); sequence ISKAAEKTSISSYTLRYYEK.

This is an uncharacterized protein from Bacillus subtilis (strain 168).